Consider the following 290-residue polypeptide: 33 kDa chaperonin (290 aa).

Intrachain disulfides connect C235–C237 and C268–C271.

It belongs to the HSP33 family. In terms of processing, under oxidizing conditions two disulfide bonds are formed involving the reactive cysteines. Under reducing conditions zinc is bound to the reactive cysteines and the protein is inactive.

The protein localises to the cytoplasm. In terms of biological role, redox regulated molecular chaperone. Protects both thermally unfolding and oxidatively damaged proteins from irreversible aggregation. Plays an important role in the bacterial defense system toward oxidative stress. In Streptococcus pyogenes serotype M12 (strain MGAS2096), this protein is 33 kDa chaperonin.